Here is a 991-residue protein sequence, read N- to C-terminus: uncharacterized protein (991 aa).

An N-terminal signal peptide occupies residues 1 to 17; that stretch reads MLWPAALVAMFALAARA. 6 disordered regions span residues 332 to 352, 392 to 425, 469 to 511, 542 to 569, 587 to 641, and 658 to 734; these read DPLP…GETT, TTED…TTEG, EDST…EDTT, DTEA…TTPV, PAPT…NSLS, and ASSG…PPRI. Over residues 400-413 the composition is skewed to low complexity; the sequence is TSTPTVTTVIDPTS. A compositionally biased stretch (polar residues) spans 414–425; that stretch reads GAVTTESRTTEG. Over residues 472–493 the composition is skewed to low complexity; sequence TTTARAAEYPTPTTTTVEPRPA. Residues 542–554 show a composition bias toward polar residues; that stretch reads DTEAAQSATSISD. Low complexity-rich tracts occupy residues 556 to 569 and 598 to 615; these read VTPE…TTPV and ASTT…SHTP. Composition is skewed to polar residues over residues 617 to 628 and 658 to 667; these read PQESTSTPSRAP and ASSGPGASTG. Low complexity predominate over residues 668-682; the sequence is ATTAPISPPWSASPA. The span at 686–710 shows a compositional bias: polar residues; that stretch reads VTTSAARTLEPSSTRKAVAAESTTA.

This is an uncharacterized protein from Psittacid herpesvirus 1 (isolate Amazon parrot/-/97-0001/1997) (PsHV-1).